We begin with the raw amino-acid sequence, 121 residues long: Large ribosomal subunit protein uL14 (121 aa).

The protein belongs to the universal ribosomal protein uL14 family. In terms of assembly, part of the 50S ribosomal subunit. Forms a cluster with proteins L3 and L19. In the 70S ribosome, L14 and L19 interact and together make contacts with the 16S rRNA in bridges B5 and B8.

In terms of biological role, binds to 23S rRNA. Forms part of two intersubunit bridges in the 70S ribosome. The chain is Large ribosomal subunit protein uL14 from Prochlorococcus marinus (strain NATL1A).